Here is a 743-residue protein sequence, read N- to C-terminus: Phosphoribosylformylglycinamidine synthase subunit PurL (743 aa).

Histidine 50 is an active-site residue. ATP is bound by residues tyrosine 53 and lysine 92. Glutamate 94 provides a ligand contact to Mg(2+). Substrate is bound by residues 95–98 and arginine 117; that span reads SHNH. Histidine 96 functions as the Proton acceptor in the catalytic mechanism. Residue aspartate 118 coordinates Mg(2+). Glutamine 241 serves as a coordination point for substrate. Position 269 (aspartate 269) interacts with Mg(2+). Position 313–315 (313–315) interacts with substrate; that stretch reads ESQ. Aspartate 494 and glycine 531 together coordinate ATP. Asparagine 532 contacts Mg(2+). Residue serine 534 coordinates substrate.

Belongs to the FGAMS family. Monomer. Part of the FGAM synthase complex composed of 1 PurL, 1 PurQ and 2 PurS subunits.

Its subcellular location is the cytoplasm. The enzyme catalyses N(2)-formyl-N(1)-(5-phospho-beta-D-ribosyl)glycinamide + L-glutamine + ATP + H2O = 2-formamido-N(1)-(5-O-phospho-beta-D-ribosyl)acetamidine + L-glutamate + ADP + phosphate + H(+). Its pathway is purine metabolism; IMP biosynthesis via de novo pathway; 5-amino-1-(5-phospho-D-ribosyl)imidazole from N(2)-formyl-N(1)-(5-phospho-D-ribosyl)glycinamide: step 1/2. Its function is as follows. Part of the phosphoribosylformylglycinamidine synthase complex involved in the purines biosynthetic pathway. Catalyzes the ATP-dependent conversion of formylglycinamide ribonucleotide (FGAR) and glutamine to yield formylglycinamidine ribonucleotide (FGAM) and glutamate. The FGAM synthase complex is composed of three subunits. PurQ produces an ammonia molecule by converting glutamine to glutamate. PurL transfers the ammonia molecule to FGAR to form FGAM in an ATP-dependent manner. PurS interacts with PurQ and PurL and is thought to assist in the transfer of the ammonia molecule from PurQ to PurL. The chain is Phosphoribosylformylglycinamidine synthase subunit PurL from Mesorhizobium japonicum (strain LMG 29417 / CECT 9101 / MAFF 303099) (Mesorhizobium loti (strain MAFF 303099)).